The sequence spans 314 residues: Replication initiation protein (314 aa).

Residues 1-10 show a composition bias toward polar residues; the sequence is MSKNNHANHS. Residues 1–25 are disordered; sequence MSKNNHANHSNHLENHDLDNFSKTG. Residues 11–20 show a composition bias toward basic and acidic residues; the sequence is NHLENHDLDN.

This sequence belongs to the plasmid replication initiation factor family.

In terms of biological role, this protein is probably a specific topoisomerase involved in initiating replication. This protein is specifically required and may be rate-limiting for replication of the plasmid in vivo. The chain is Replication initiation protein (repN) from Staphylococcus aureus.